A 213-amino-acid chain; its full sequence is Peptidyl-tRNA hydrolase (213 aa).

Tyr26 serves as a coordination point for tRNA. The active-site Proton acceptor is the His31. TRNA-binding residues include Tyr78, Asn80, and Asn126.

The protein belongs to the PTH family. In terms of assembly, monomer.

It localises to the cytoplasm. It catalyses the reaction an N-acyl-L-alpha-aminoacyl-tRNA + H2O = an N-acyl-L-amino acid + a tRNA + H(+). Hydrolyzes ribosome-free peptidyl-tRNAs (with 1 or more amino acids incorporated), which drop off the ribosome during protein synthesis, or as a result of ribosome stalling. Its function is as follows. Catalyzes the release of premature peptidyl moieties from peptidyl-tRNA molecules trapped in stalled 50S ribosomal subunits, and thus maintains levels of free tRNAs and 50S ribosomes. In Trichormus variabilis (strain ATCC 29413 / PCC 7937) (Anabaena variabilis), this protein is Peptidyl-tRNA hydrolase.